The following is a 428-amino-acid chain: Glutamate--tRNA ligase 2 (428 aa).

The 'HIGH' region signature appears at 6–16 (PSPTGDMRTEQ).

Belongs to the class-I aminoacyl-tRNA synthetase family. Glutamate--tRNA ligase type 1 subfamily. As to quaternary structure, monomer.

It is found in the cytoplasm. It catalyses the reaction tRNA(Glu) + L-glutamate + ATP = L-glutamyl-tRNA(Glu) + AMP + diphosphate. In terms of biological role, catalyzes the attachment of glutamate to tRNA(Glu) in a two-step reaction: glutamate is first activated by ATP to form Glu-AMP and then transferred to the acceptor end of tRNA(Glu). This chain is Glutamate--tRNA ligase 2, found in Sulfurovum sp. (strain NBC37-1).